The sequence spans 555 residues: Potassium-transporting ATPase potassium-binding subunit (555 aa).

A run of 10 helical transmembrane segments spans residues 2–22, 60–80, 130–150, 173–193, 246–266, 278–298, 374–394, 412–432, 483–503, and 525–545; these read IWVAVVITMLLFILVAKPTGI, QYALSLVLLNGFMIVVVYFVF, IGITFLMFAAPATTLALVMAF, VFLPIAFMAALVFVALGVPQT, MSNILQMMLMMLLPTALPFTY, ILFVSLFMVFLLGFITITTSE, AGFVNIIMYAIIAVFISGLMV, LIAVTILFHPLLILGFSALAL, LVMFLGRYFSLITMLAVAASL, and GIFIGTIVIVGALTFFPMLVL.

This sequence belongs to the KdpA family. In terms of assembly, the system is composed of three essential subunits: KdpA, KdpB and KdpC.

The protein resides in the cell membrane. Part of the high-affinity ATP-driven potassium transport (or Kdp) system, which catalyzes the hydrolysis of ATP coupled with the electrogenic transport of potassium into the cytoplasm. This subunit binds the extracellular potassium ions and delivers the ions to the membrane domain of KdpB through an intramembrane tunnel. The polypeptide is Potassium-transporting ATPase potassium-binding subunit (Bacillus cereus (strain ATCC 10987 / NRS 248)).